A 134-amino-acid chain; its full sequence is uncharacterized protein (134 aa).

Transmembrane regions (helical) follow at residues 26–46 (VAVF…GNIG), 55–75 (LLKF…QIIV), and 101–121 (YAPM…GLIL).

It is found in the membrane. This is an uncharacterized protein from Dictyostelium discoideum (Social amoeba).